Consider the following 407-residue polypeptide: Peptidase T (407 aa).

Position 81 (H81) interacts with Zn(2+). Residue D83 is part of the active site. Residue D142 coordinates Zn(2+). Residue E176 is the Proton acceptor of the active site. 3 residues coordinate Zn(2+): E177, D199, and H381.

This sequence belongs to the peptidase M20B family. The cofactor is Zn(2+).

It is found in the cytoplasm. It catalyses the reaction Release of the N-terminal residue from a tripeptide.. Its function is as follows. Cleaves the N-terminal amino acid of tripeptides. This Streptococcus pneumoniae (strain P1031) protein is Peptidase T.